Reading from the N-terminus, the 126-residue chain is Histone H2B type 1-M (126 aa).

The interval 1–36 (MPEPVKSAPVPKKGSKKAINKAQKKDGKKRKRSRKE) is disordered. Proline 2 carries the N-acetylproline modification. An ADP-ribosyl glutamic acid modification is found at glutamate 3. Lysine 6 is modified (N6-(2-hydroxyisobutyryl)lysine; alternate). Lysine 6 carries the post-translational modification N6-(beta-hydroxybutyryl)lysine; alternate. The residue at position 6 (lysine 6) is an N6-acetyllysine; alternate. Lysine 6 bears the N6-butyryllysine; alternate mark. Lysine 6 carries the post-translational modification N6-crotonyllysine; alternate. An N6-lactoyllysine; alternate modification is found at lysine 6. Lysine 6 participates in a covalent cross-link: Glycyl lysine isopeptide (Lys-Gly) (interchain with G-Cter in SUMO2); alternate. Serine 7 is subject to ADP-ribosylserine. Residue lysine 12 is modified to N6-(beta-hydroxybutyryl)lysine; alternate. An N6-acetyllysine; alternate mark is found at lysine 12 and lysine 13. An N6-crotonyllysine; alternate mark is found at lysine 12 and lysine 13. Position 12 is an N6-lactoyllysine; alternate (lysine 12). Residue lysine 13 is modified to N6-(2-hydroxyisobutyryl)lysine; alternate. Phosphoserine; by STK4/MST1 is present on serine 15. N6-acetyllysine; alternate is present on residues lysine 16, lysine 17, lysine 21, and lysine 24. N6-crotonyllysine; alternate is present on residues lysine 16, lysine 17, lysine 21, and lysine 24. Lysine 16, lysine 17, lysine 21, and lysine 24 each carry N6-lactoyllysine; alternate. N6-(beta-hydroxybutyryl)lysine; alternate occurs at positions 17 and 21. Residue lysine 17 is modified to N6-glutaryllysine; alternate. N6-(2-hydroxyisobutyryl)lysine; alternate occurs at positions 21 and 24. Lysine 21 carries the post-translational modification N6-butyryllysine; alternate. Lysine 21 participates in a covalent cross-link: Glycyl lysine isopeptide (Lys-Gly) (interchain with G-Cter in SUMO2); alternate. Lysine 25 bears the N6-(2-hydroxyisobutyryl)lysine mark. At lysine 35 the chain carries N6-(2-hydroxyisobutyryl)lysine; alternate. Lysine 35 bears the N6-(beta-hydroxybutyryl)lysine; alternate mark. Lysine 35 is modified (N6-crotonyllysine; alternate). An N6-glutaryllysine; alternate modification is found at lysine 35. Lysine 35 is modified (N6-succinyllysine; alternate). Lysine 35 participates in a covalent cross-link: Glycyl lysine isopeptide (Lys-Gly) (interchain with G-Cter in ubiquitin); alternate. The residue at position 36 (glutamate 36) is a PolyADP-ribosyl glutamic acid. Serine 37 carries the post-translational modification Phosphoserine; by AMPK. N6-(2-hydroxyisobutyryl)lysine; alternate occurs at positions 44, 47, and 58. Lysine 44 bears the N6-lactoyllysine; alternate mark. Lysine 44 and lysine 47 each carry N6-glutaryllysine; alternate. At lysine 47 the chain carries N6-methyllysine; alternate. Lysine 58 is subject to N6,N6-dimethyllysine; alternate. A Dimethylated arginine modification is found at arginine 80. Position 86 is an N6-(2-hydroxyisobutyryl)lysine; alternate (lysine 86). Lysine 86 carries the N6-(beta-hydroxybutyryl)lysine; alternate modification. Lysine 86 is subject to N6-acetyllysine; alternate. Lysine 86 is subject to N6-lactoyllysine; alternate. Lysine 86 is modified (N6,N6,N6-trimethyllysine; alternate). Omega-N-methylarginine is present on residues arginine 87 and arginine 93. Lysine 109 is modified (N6-(2-hydroxyisobutyryl)lysine; alternate). N6-lactoyllysine; alternate is present on lysine 109. Lysine 109 is modified (N6-glutaryllysine; alternate). An N6-methyllysine; alternate modification is found at lysine 109. The O-linked (GlcNAc) serine glycan is linked to serine 113. Residue threonine 116 is modified to Phosphothreonine. Residues lysine 117 and lysine 121 each carry the N6-(2-hydroxyisobutyryl)lysine; alternate modification. 2 positions are modified to N6-(beta-hydroxybutyryl)lysine; alternate: lysine 117 and lysine 121. Residues lysine 117 and lysine 121 each carry the N6-lactoyllysine; alternate modification. Lysine 117 and lysine 121 each carry N6-glutaryllysine; alternate. Residues lysine 117 and lysine 121 each carry the N6-succinyllysine; alternate modification. The residue at position 117 (lysine 117) is an N6-malonyllysine; alternate. At lysine 117 the chain carries N6-methylated lysine; alternate. Lysine 121 is covalently cross-linked (Glycyl lysine isopeptide (Lys-Gly) (interchain with G-Cter in ubiquitin); alternate).

This sequence belongs to the histone H2B family. In terms of assembly, the nucleosome is a histone octamer containing two molecules each of H2A, H2B, H3 and H4 assembled in one H3-H4 heterotetramer and two H2A-H2B heterodimers. The octamer wraps approximately 147 bp of DNA. In terms of processing, monoubiquitination at Lys-35 (H2BK34Ub) by the MSL1/MSL2 dimer is required for histone H3 'Lys-4' (H3K4me) and 'Lys-79' (H3K79me) methylation and transcription activation at specific gene loci, such as HOXA9 and MEIS1 loci. Similarly, monoubiquitination at Lys-121 (H2BK120Ub) by the RNF20/40 complex gives a specific tag for epigenetic transcriptional activation and is also prerequisite for histone H3 'Lys-4' and 'Lys-79' methylation. It also functions cooperatively with the FACT dimer to stimulate elongation by RNA polymerase II. H2BK120Ub also acts as a regulator of mRNA splicing: deubiquitination by USP49 is required for efficient cotranscriptional splicing of a large set of exons. Post-translationally, phosphorylation at Ser-37 (H2BS36ph) by AMPK in response to stress promotes transcription. Phosphorylated on Ser-15 (H2BS14ph) by STK4/MST1 during apoptosis; which facilitates apoptotic chromatin condensation. Also phosphorylated on Ser-15 in response to DNA double strand breaks (DSBs), and in correlation with somatic hypermutation and immunoglobulin class-switch recombination. GlcNAcylation at Ser-113 promotes monoubiquitination of Lys-121. It fluctuates in response to extracellular glucose, and associates with transcribed genes. In terms of processing, ADP-ribosylated by PARP1 or PARP2 on Ser-7 (H2BS6ADPr) in response to DNA damage. H2BS6ADPr promotes recruitment of CHD1L. Mono-ADP-ribosylated on Glu-3 (H2BE2ADPr) by PARP3 in response to single-strand breaks. Poly ADP-ribosylation on Glu-36 (H2BE35ADPr) by PARP1 regulates adipogenesis: it inhibits phosphorylation at Ser-37 (H2BS36ph), thereby blocking expression of pro-adipogenetic genes. Post-translationally, crotonylation (Kcr) is specifically present in male germ cells and marks testis-specific genes in post-meiotic cells, including X-linked genes that escape sex chromosome inactivation in haploid cells. Crotonylation marks active promoters and enhancers and confers resistance to transcriptional repressors. It is also associated with post-meiotically activated genes on autosomes. Lactylated in macrophages by EP300/P300 by using lactoyl-CoA directly derived from endogenous or exogenous lactate, leading to stimulates gene transcription.

The protein resides in the nucleus. It is found in the chromosome. Its function is as follows. Core component of nucleosome. Nucleosomes wrap and compact DNA into chromatin, limiting DNA accessibility to the cellular machineries which require DNA as a template. Histones thereby play a central role in transcription regulation, DNA repair, DNA replication and chromosomal stability. DNA accessibility is regulated via a complex set of post-translational modifications of histones, also called histone code, and nucleosome remodeling. This chain is Histone H2B type 1-M, found in Homo sapiens (Human).